We begin with the raw amino-acid sequence, 559 residues long: Actin-binding protein WASF1 (559 aa).

Disordered regions lie at residues 169-202 (TEDKRKEKRKQKQKNLDRPHEPEKVPRAPHDRRR), 307-400 (RPQS…SPPV), and 412-492 (VHPL…STLP). A compositionally biased stretch (basic and acidic residues) spans 182 to 202 (KNLDRPHEPEKVPRAPHDRRR). The segment covering 322–332 (PTPPPPPPPLP) has biased composition (pro residues). The segment covering 333 to 346 (SALSTSSLRASMTS) has biased composition (low complexity). The residue at position 341 (arginine 341) is an Asymmetric dimethylarginine; alternate. Arginine 341 bears the Omega-N-methylarginine; alternate mark. 4 stretches are compositionally biased toward pro residues: residues 347-374 (TPPPPVPPPPPPPAPALQAPAVPPPPAP), 384-399 (PAPPPIAPPLVQPSPP), 423-437 (LPPPPPPPPLPPPGI), and 458-477 (TPSPAPGPHAPLMPPSPPSQ). A Phosphoserine modification is found at serine 489. Positions 497 to 514 (ARSVLLEAIRKGIQLRKV) constitute a WH2 domain.

Belongs to the SCAR/WAVE family. As to quaternary structure, component of the WAVE1 complex composed of ABI2, CYFIP1 or CYFIP2, BRK1, NCKAP1 and WASF1/WAVE1. Within the complex, a heterodimer containing NCKAP1 and CYFIP1 interacts with a heterotrimer formed by WAVE1, ABI2 and BRK1. CYFIP2 binds to activated RAC1 which causes the complex to dissociate, releasing activated WASF1. The complex can also be activated by NCK1. Binds actin and the Arp2/3 complex. Interacts with BAIAP2. Interacts with SHANK3; the interaction mediates the association of SHANK3 with the WAVE1 complex. Interacts with ABI1 (via N-terminus). Interacts with SORBS2; this interaction greatly enhances phosphorylation by ABL1 and dephosphorylation by PTPN12 and might mediate partial to focal adhesion sites. In terms of tissue distribution, expressed in hippocampal neurons (at protein level).

It localises to the cytoplasm. It is found in the cytoskeleton. The protein resides in the synapse. The protein localises to the cell junction. Its subcellular location is the focal adhesion. In terms of biological role, downstream effector molecule involved in the transmission of signals from tyrosine kinase receptors and small GTPases to the actin cytoskeleton. Promotes formation of actin filaments. Part of the WAVE complex that regulates lamellipodia formation. The WAVE complex regulates actin filament reorganization via its interaction with the Arp2/3 complex. As component of the WAVE1 complex, required for BDNF-NTRK2 endocytic trafficking and signaling from early endosomes. Also involved in the regulation of mitochondrial dynamics. In Rattus norvegicus (Rat), this protein is Actin-binding protein WASF1 (Wasf1).